Reading from the N-terminus, the 94-residue chain is MTKSELIERLASQQSHIPAKAVEDAVKEMLEHMASTLAQGERIEIRGFGSFSLHYRAPRTGRNPKTGDKVELEGKYVPHFKPGKELRDRANIYG.

This sequence belongs to the bacterial histone-like protein family. In terms of assembly, heterodimer of an alpha and a beta chain.

Functionally, this protein is one of the two subunits of integration host factor, a specific DNA-binding protein that functions in genetic recombination as well as in transcriptional and translational control. The chain is Integration host factor subunit beta from Salmonella arizonae (strain ATCC BAA-731 / CDC346-86 / RSK2980).